The following is a 955-amino-acid chain: MTRKNTTTNPWAKFHGPNLGYVIEQYDLYVTGAGSVDPELQELFEIFGAPSFQDDVVTGDNTATHFSPQNTGNIEKILKVVQLVEQIRSFGHTLAHINPMEDAANGQSLLEKAMSELSDADLKAIPAKTVWPDAPEGIHTALDVIHRLKDVYTKSLAYEFSHIQDSEERAWLHQMVESNSLRQPLSNKKRTALLKRLTAVEGFEQFLHKTFVGQKRFSIEGVDMLVPVLDEIVLEGAKNGVEDVMIGMAHRGRLSVLAHVLEKPYSHMFAEFKHAKIEGAVANSGWTGDVKYHLGREQVVSNEEVSTRVTLANNPSHLEFVNPVVEGFARAAQENRKKSGLPDQDTSKSFVILVHGDAAFPGQGIVSETLNLSRLNAYQTGGTIHVIANNAVGFTTDSYDSRSTKYSSDLAKGFDIPIVHVNADDPEACLAAANLAIQYRMLFKKDFLIDLIGYRRYGHNEMDDPAVTQPQVYKKIKNHPTVRAIYADQLQAAGVLNADEVETITQFTQEQLKSDYAQVPPADTSDATIHVKVPDVVAKGIQSIDTGVEIDSLRAINEGLLSWPEGFNVYPKVKKILERRKDALEENGKIEWALAESLAFASILQEGTPIRLTGQDSQRGTFAHRHIVLHDTDTNETYSPLHRLPNINASFSVHNSPLSEAAVVGYEYGYNVFAPETLVMWEAQYGDFSNTAQALFDQYVSAGRAKWGQKSGLVLLLPHGYEGQGPEHSSARPERFLQLAAENNWTVANLTSAAQYFHILRRQASILGTEAVRPLVLMTPKSLLRHPLTLSTASQLSEGRFQPALEQENLGMKPNKVKRLVLSTGKMAIDLAAEIESGKHEYNLDEVHVVRIEQLYPFPAEKVQSIIKRFKNLEEIIWVQEEPRNMGAWHYMAPILFELAGDKVKTGYIGRPDRSSPSGGDPFAHKAEQELIVAHALDVKYNFRQDKQEIEVYSN.

It belongs to the alpha-ketoglutarate dehydrogenase family. In terms of assembly, homodimer. Part of the 2-oxoglutarate dehydrogenase (OGDH) complex composed of E1 (2-oxoglutarate dehydrogenase), E2 (dihydrolipoamide succinyltransferase) and E3 (dihydrolipoamide dehydrogenase); the complex contains multiple copies of the three enzymatic components (E1, E2 and E3). The cofactor is thiamine diphosphate.

It carries out the reaction N(6)-[(R)-lipoyl]-L-lysyl-[protein] + 2-oxoglutarate + H(+) = N(6)-[(R)-S(8)-succinyldihydrolipoyl]-L-lysyl-[protein] + CO2. E1 component of the 2-oxoglutarate dehydrogenase (OGDH) complex which catalyzes the decarboxylation of 2-oxoglutarate, the first step in the conversion of 2-oxoglutarate to succinyl-CoA and CO(2). This is 2-oxoglutarate dehydrogenase E1 component from Bacillus cereus (strain B4264).